The chain runs to 7603 residues: Cysteine repeat modular protein B (7603 aa).

The N-linked (GlcNAc...) asparagine glycan is linked to Asn172. The chain crosses the membrane as a helical span at residues 223–243 (LVGFFLVPVFVVFFVLSSDAT). Disordered stretches follow at residues 248–275 (GVGV…SSPG) and 291–323 (RDTK…GKGF). Residues 263–275 (SVSSSSRASSSPG) show a composition bias toward low complexity. Over residues 302–313 (SSRRSARARRRR) the composition is skewed to basic residues. Asn329, Asn589, Asn848, Asn1128, Asn1183, and Asn1402 each carry an N-linked (GlcNAc...) asparagine glycan. Positions 1554–1574 (VLRSRSGPSHPSSVSQPSPSF) are disordered. The segment covering 1557-1573 (SRSGPSHPSSVSQPSPS) has biased composition (low complexity). N-linked (GlcNAc...) asparagine glycosylation is found at Asn1622, Asn2578, Asn2664, Asn3094, and Asn3126. Positions 3316 to 3445 (SNAVPEADEN…SDLTTSQPED (130 aa)) are disordered. The span at 3321–3340 (EADENQVESAEPEQNAEGET) shows a compositional bias: acidic residues. Over residues 3342–3360 (EQGAEEAGGNAAEPGAESG) the composition is skewed to low complexity. N-linked (GlcNAc...) asparagine glycans are attached at residues Asn3546, Asn4367, Asn4823, Asn4901, Asn5186, Asn5546, and Asn5666. The interval 5758 to 5799 (LAESRSDDGTVGDDVDLDDNALSGTTNSGWTTSSSNSERVRK) is disordered. A compositionally biased stretch (acidic residues) spans 5767–5776 (TVGDDVDLDD). Low complexity predominate over residues 5780–5794 (SGTTNSGWTTSSSNS). 5 N-linked (GlcNAc...) asparagine glycosylation sites follow: Asn5806, Asn5876, Asn5998, Asn6055, and Asn6369. A disordered region spans residues 6043–6115 (GEADHTPADG…EASEAESVSA (73 aa)). A compositionally biased stretch (polar residues) spans 6051–6060 (DGSSNSSEDS). A compositionally biased stretch (basic and acidic residues) spans 6391–6405 (EFTDTGPAPDDHTDE). A disordered region spans residues 6391–6436 (EFTDTGPAPDDHTDEGGANLDSTGGSGEPSSSAPVDPSGENEGQLL). The span at 6410–6423 (LDSTGGSGEPSSSA) shows a compositional bias: polar residues. The N-linked (GlcNAc...) asparagine glycan is linked to Asn6453. 8 helical membrane passes run 6520–6540 (IFIL…ALTI), 6552–6572 (VLIR…LMPA), 6578–6598 (LAGW…ALHP), 6627–6647 (IFVP…CVAT), 6770–6790 (LILG…GFVA), 6831–6851 (CVAL…QEIF), 6888–6908 (GLMV…FEVF), and 6912–6932 (GAIP…SLFV). Asn7013 carries N-linked (GlcNAc...) asparagine glycosylation. Residues 7017-7037 (FVAALSDSLSQLVIAWCQFTI) traverse the membrane as a helical segment. An N-linked (GlcNAc...) asparagine glycan is attached at Asn7061. Positions 7174–7242 (APQLRKENHA…RGLIESEIDD (69 aa)) form a coiled coil. Positions 7379 to 7603 (AAPAAGLRSH…LKKPGSPKQE (225 aa)) are disordered. Polar residues predominate over residues 7408-7417 (LGTNLSTPSA). The N-linked (GlcNAc...) asparagine glycan is linked to Asn7411. Low complexity-rich tracts occupy residues 7474–7496 (PTPS…SVTP), 7509–7541 (SEAP…SSDL), and 7560–7582 (GEAA…AAQP).

As to quaternary structure, component of a complex, at least composed of cysteine repeat modular protein A (CRMPa), cysteine repeat modular protein B (CRMPb), micronemal protein 15 (MIC15) and thrombospondin type 1 domain-containing protein (TSP1).

Its subcellular location is the cell membrane. The protein resides in the endoplasmic reticulum. The protein localises to the golgi apparatus. In terms of biological role, required for triggering rhoptry secretion. Plays a role in host cell invasion. In Toxoplasma gondii, this protein is Cysteine repeat modular protein B.